A 428-amino-acid polypeptide reads, in one-letter code: Serine--tRNA ligase (428 aa).

An L-serine-binding site is contributed by 231–233 (TSE). ATP contacts are provided by residues 262–264 (RRE) and V278. An L-serine-binding site is contributed by E285. ATP is bound at residue 349–352 (ELTS). T384 contributes to the L-serine binding site.

The protein belongs to the class-II aminoacyl-tRNA synthetase family. Type-1 seryl-tRNA synthetase subfamily. Homodimer. The tRNA molecule binds across the dimer.

It is found in the cytoplasm. The enzyme catalyses tRNA(Ser) + L-serine + ATP = L-seryl-tRNA(Ser) + AMP + diphosphate + H(+). The catalysed reaction is tRNA(Sec) + L-serine + ATP = L-seryl-tRNA(Sec) + AMP + diphosphate + H(+). Its pathway is aminoacyl-tRNA biosynthesis; selenocysteinyl-tRNA(Sec) biosynthesis; L-seryl-tRNA(Sec) from L-serine and tRNA(Sec): step 1/1. Catalyzes the attachment of serine to tRNA(Ser). Is also able to aminoacylate tRNA(Sec) with serine, to form the misacylated tRNA L-seryl-tRNA(Sec), which will be further converted into selenocysteinyl-tRNA(Sec). The chain is Serine--tRNA ligase from Bifidobacterium adolescentis (strain ATCC 15703 / DSM 20083 / NCTC 11814 / E194a).